Consider the following 405-residue polypeptide: MTQSQYRPGPDANGLFGSFGGRYVAETLMPLVLDLAREYEAAKADPKFLEELAYFQRDYIGRPNPLYFAERLTEHCGGAKIFFKREELNHTGAHKVNNCIGQVLLAKRMGKKRLIAETGAGMHGVATATVAARFGLPCVIYMGATDIERQQANVFRMKLLGAEIVPVTAGTGTLKDAMNEALRDWVTNVEDTFYLIGTVAGPHPYPAMVRDFQSIIGKETRAQLQEKEGRLPDSLVACVGGGSNAMGLFHEFLEEPSVQIIGVEAGGHGVHTDKHAASLNGGVPGVLHGNRTYLLQDQDGQITDAHSISAGLDYPGIGPEHAYLHEVKRVEYVSITDDEALDAFHATCRLEGIIPALESSHALAEAIKRAPKLPKDHLMVVCLSGRGDKDMQTVMNHMAAQEKQA.

The residue at position 95 (Lys95) is an N6-(pyridoxal phosphate)lysine.

This sequence belongs to the TrpB family. As to quaternary structure, tetramer of two alpha and two beta chains. It depends on pyridoxal 5'-phosphate as a cofactor.

The catalysed reaction is (1S,2R)-1-C-(indol-3-yl)glycerol 3-phosphate + L-serine = D-glyceraldehyde 3-phosphate + L-tryptophan + H2O. The protein operates within amino-acid biosynthesis; L-tryptophan biosynthesis; L-tryptophan from chorismate: step 5/5. In terms of biological role, the beta subunit is responsible for the synthesis of L-tryptophan from indole and L-serine. This chain is Tryptophan synthase beta chain, found in Pseudomonas putida (strain ATCC 47054 / DSM 6125 / CFBP 8728 / NCIMB 11950 / KT2440).